The following is a 180-amino-acid chain: Small ribosomal subunit protein uS4 (180 aa).

In terms of domain architecture, S4 RNA-binding spans 104-166; that stretch reads RRLQTIVHRK…PTSPFKNNPP (63 aa). Positions 155 to 180 are disordered; it reads FYPTSPFKNNPPTAGQGEVNVEQKGN.

This sequence belongs to the universal ribosomal protein uS4 family. In terms of assembly, part of the 30S ribosomal subunit. Contacts protein S5. The interaction surface between S4 and S5 is involved in control of translational fidelity.

In terms of biological role, one of the primary rRNA binding proteins, it binds directly to 16S rRNA where it nucleates assembly of the body of the 30S subunit. Functionally, with S5 and S12 plays an important role in translational accuracy. This is Small ribosomal subunit protein uS4 from Metallosphaera sedula (strain ATCC 51363 / DSM 5348 / JCM 9185 / NBRC 15509 / TH2).